Here is a 429-residue protein sequence, read N- to C-terminus: MTAGRVNPYSIVSSEEDGLRLTTMPGINGFGNGKIHTRRKCRNRFVKKNGQCNVEFTNMDDKPQRYIADMFTTCVDIRWRYMLLLFSLAFLVSWLLFGLIFWLIALIHGDLENPGGDDTFKPCVLQVNGFVAAFLFSIETQTTIGYGFRCVTEECPLAVFMVVVQSIVGCIIDSFMIGAIMAKMARPKKRAQTLLFSHNAVVAMRDGKLCLMWRVGNLRKSHIVEAHVRAQLIKPRITEEGEYIPLDQIDIDVGFDKGLDRIFLVSPITILHEINEDSPLFGISRQDLETDDFEIVVILEGMVEATAMTTQARSSYLASEILWGHRFEPVLFEEKNQYKVDYSHFHKTYEVPSTPRCSAKDLVENKFLLPSTNSFCYENELAFMSRDEDEEDDDSRGLDDLSPDNRHEFDRLQATIALDQRSYRRESEI.

Residues 1–76 (MTAGRVNPYS…IADMFTTCVD (76 aa)) are Cytoplasmic-facing. A helical transmembrane segment spans residues 77 to 103 (IRWRYMLLLFSLAFLVSWLLFGLIFWL). A 1,2-diacyl-sn-glycero-3-phospho-(1D-myo-inositol-4,5-bisphosphate) is bound by residues R78 and R80. The Extracellular portion of the chain corresponds to 104–129 (IALIHGDLENPGGDDTFKPCVLQVNG). A disulfide bridge links C123 with C155. The helical; Pore-forming intramembrane region spans 130–146 (FVAAFLFSIETQTTIGY). K(+) contacts are provided by T143, I144, G145, and Y146. The Selectivity filter signature appears at 143–148 (TIGYGF). Topologically, residues 147–155 (GFRCVTEEC) are extracellular. The helical transmembrane segment at 156–183 (PLAVFMVVVQSIVGCIIDSFMIGAIMAK) threads the bilayer. A 1,2-diacyl-sn-glycero-3-phospho-(1D-myo-inositol-4,5-bisphosphate)-binding residues include K183 and K188. Residues 184 to 429 (MARPKKRAQT…QRSYRRESEI (246 aa)) lie on the Cytoplasmic side of the membrane. Residues 386–407 (RDEDEEDDDSRGLDDLSPDNRH) are disordered. A compositionally biased stretch (basic and acidic residues) spans 395 to 407 (SRGLDDLSPDNRH).

Belongs to the inward rectifier-type potassium channel family. Homotetramer.

The protein resides in the membrane. It localises to the cell membrane. It is found in the sarcolemma. Its subcellular location is the T-tubule. It catalyses the reaction K(+)(in) = K(+)(out). Its activity is regulated as follows. Activated by phosphatidylinositol 4,5-bisphosphate (PtdIns(4,5)P2). PtdIns(4,5)P2 binding to the cytoplasmic side of the channel triggers a conformation change leading to channel opening. In terms of biological role, inward rectifying potassium channel that probably participates in controlling the resting membrane potential in electrically excitable cells. Probably participates in establishing action potential waveform and excitability of neuronal and muscle tissues. Inward rectifier potassium channels are characterized by a greater tendency to allow potassium to flow into the cell rather than out of it. Their voltage dependence is regulated by the concentration of extracellular potassium; as external potassium is raised, the voltage range of the channel opening shifts to more positive voltages. The inward rectification is mainly due to the blockage of outward current by internal magnesium. The chain is ATP-sensitive inward rectifier potassium channel 12 (KCNJ12) from Gallus gallus (Chicken).